Here is a 287-residue protein sequence, read N- to C-terminus: ATP synthase gamma chain (287 aa).

The protein belongs to the ATPase gamma chain family. F-type ATPases have 2 components, CF(1) - the catalytic core - and CF(0) - the membrane proton channel. CF(1) has five subunits: alpha(3), beta(3), gamma(1), delta(1), epsilon(1). CF(0) has three main subunits: a, b and c.

It localises to the cell inner membrane. In terms of biological role, produces ATP from ADP in the presence of a proton gradient across the membrane. The gamma chain is believed to be important in regulating ATPase activity and the flow of protons through the CF(0) complex. This Hahella chejuensis (strain KCTC 2396) protein is ATP synthase gamma chain.